A 272-amino-acid chain; its full sequence is PHD finger protein ALFIN-LIKE 6 (272 aa).

Residues 1–23 (MEGGGGGGGGGGGGGGGGGGGGA) show a composition bias toward gly residues. Disordered stretches follow at residues 1–24 (MEGGGGGGGGGGGGGGGGGGGGAP) and 162–218 (QAKE…DNTL). The span at 168-182 (PNSSSKSNKPSSKVQ) shows a compositional bias: low complexity. Basic and acidic residues predominate over residues 183 to 200 (SKAESRSKSKLSAPKDEE). Residues 201-214 (GSGDDEGEEEEDDH) are compositionally biased toward acidic residues. A PHD-type zinc finger spans residues 216–268 (NTLCGTCGTNDGKDEFWICCDNCEKWYHGKCVKITPARAEHIKQYKCPDCTNK).

It belongs to the Alfin family.

It is found in the nucleus. Functionally, histone-binding component that specifically recognizes H3 tails trimethylated on 'Lys-4' (H3K4me3), which mark transcription start sites of virtually all active genes. This Oryza sativa subsp. japonica (Rice) protein is PHD finger protein ALFIN-LIKE 6.